The following is a 388-amino-acid chain: MKTIQEQLPNDLVEEILCRVPATSLRRLRSTCKAWNRLFKGDRILASKHFEKSAKQFRSLSLRNDYRIFPISFNLHGNSPSLELKSELIDPHSKNSAAPFEISRVIHCEGLLLCSSQLDESRVVVWNPLTGETRWIRTGDFRQKGRSFDVGYYYQKDKRSWIKSYKLLCYYRGTKYFEIYDFDSDSWRILDDIIAPRGSIGYSELSVSLKGNTYWFAKGVTEERPRTISLLKFDFYTEKSVPVLLPYQSRRLFQASSLSVVREDKLSVLLQLDQSSKTEIWVTNVIDETTKGAVSWTKVLALDLSPHLQIGNDGSFFLGEDKKVVMFCEKLIDENKVKDMVYIVGEDNVVTEVGFGVDEMDGCRAVILNYVPSLVQIERAGGNRKRGH.

The F-box domain occupies 2 to 48 (KTIQEQLPNDLVEEILCRVPATSLRRLRSTCKAWNRLFKGDRILASK).

As to quaternary structure, interacts with EIN2 (via C-terminus).

Its function is as follows. Negative regulator of EIN2 protein stability. This is F-box protein ETP2 from Arabidopsis thaliana (Mouse-ear cress).